The following is a 230-amino-acid chain: 2,3-bisphosphoglycerate-dependent phosphoglycerate mutase (230 aa).

Substrate contacts are provided by residues 8–15 (RHGQSIWN), 21–22 (TG), R60, 87–90 (ERHY), K98, and 114–115 (RR). The Tele-phosphohistidine intermediate role is filled by H9. The active-site Proton donor/acceptor is the E87. Positions 117 to 143 (YDTPPPALDAEDERHPRHDPRYAGLDP) are disordered. Over residues 128-137 (DERHPRHDPR) the composition is skewed to basic and acidic residues. Substrate is bound at residue 183–184 (GN).

The protein belongs to the phosphoglycerate mutase family. BPG-dependent PGAM subfamily. Homodimer.

It catalyses the reaction (2R)-2-phosphoglycerate = (2R)-3-phosphoglycerate. It participates in carbohydrate degradation; glycolysis; pyruvate from D-glyceraldehyde 3-phosphate: step 3/5. In terms of biological role, catalyzes the interconversion of 2-phosphoglycerate and 3-phosphoglycerate. The protein is 2,3-bisphosphoglycerate-dependent phosphoglycerate mutase of Halorhodospira halophila (strain DSM 244 / SL1) (Ectothiorhodospira halophila (strain DSM 244 / SL1)).